Here is a 286-residue protein sequence, read N- to C-terminus: Hydroxysteroid 11-beta-dehydrogenase 1-like protein (286 aa).

The signal sequence occupies residues 1 to 17 (MGIHIKRWCFIILVASA). Residues 39 to 65 (GASTGIGEEIAYHYARAGAKLVLTARR), 90 to 91 (DM), and 117 to 119 (NHI) contribute to the NADP(+) site. A substrate-binding site is contributed by Ser-168. The active-site Proton acceptor is Tyr-181. NADP(+) is bound by residues 181–185 (YAASK) and 214–220 (GLIDTQS).

It belongs to the short-chain dehydrogenases/reductases (SDR) family.

It localises to the secreted. It carries out the reaction cortisone + NADPH + H(+) = cortisol + NADP(+). Its function is as follows. Unidirectional NADP(+)-dependent cortisol dehydrogenase (in vitro). The chain is Hydroxysteroid 11-beta-dehydrogenase 1-like protein (hsd11b1l) from Xenopus tropicalis (Western clawed frog).